The chain runs to 525 residues: Lysine--tRNA ligase (525 aa).

Positions 44-52 (PSGLPHIGT) match the 'HIGH' region motif. Residues 290–294 (KISKS) carry the 'KMSKS' region motif. Lysine 293 contacts ATP.

It belongs to the class-I aminoacyl-tRNA synthetase family.

It is found in the cytoplasm. It catalyses the reaction tRNA(Lys) + L-lysine + ATP = L-lysyl-tRNA(Lys) + AMP + diphosphate. This chain is Lysine--tRNA ligase, found in Rickettsia felis (strain ATCC VR-1525 / URRWXCal2) (Rickettsia azadi).